Reading from the N-terminus, the 203-residue chain is ATP-dependent Clp protease proteolytic subunit (203 aa).

S98 functions as the Nucleophile in the catalytic mechanism. The active site involves H123.

Belongs to the peptidase S14 family. Fourteen ClpP subunits assemble into 2 heptameric rings which stack back to back to give a disk-like structure with a central cavity, resembling the structure of eukaryotic proteasomes.

The protein localises to the cytoplasm. It carries out the reaction Hydrolysis of proteins to small peptides in the presence of ATP and magnesium. alpha-casein is the usual test substrate. In the absence of ATP, only oligopeptides shorter than five residues are hydrolyzed (such as succinyl-Leu-Tyr-|-NHMec, and Leu-Tyr-Leu-|-Tyr-Trp, in which cleavage of the -Tyr-|-Leu- and -Tyr-|-Trp bonds also occurs).. Its function is as follows. Cleaves peptides in various proteins in a process that requires ATP hydrolysis. Has a chymotrypsin-like activity. Plays a major role in the degradation of misfolded proteins. The chain is ATP-dependent Clp protease proteolytic subunit from Desulfotalea psychrophila (strain LSv54 / DSM 12343).